The primary structure comprises 401 residues: All trans-polyprenyl-diphosphate synthase PDSS2 (401 aa).

It belongs to the FPP/GGPP synthase family. In terms of assembly, heterotetramer composed of 2 PDSS1/DPS1 and 2 PDSS2/DLP1 subunits.

The protein localises to the mitochondrion. The enzyme catalyses 7 isopentenyl diphosphate + (2E,6E)-farnesyl diphosphate = all-trans-decaprenyl diphosphate + 7 diphosphate. The catalysed reaction is 6 isopentenyl diphosphate + (2E,6E)-farnesyl diphosphate = all-trans-nonaprenyl diphosphate + 6 diphosphate. It participates in cofactor biosynthesis; ubiquinone biosynthesis. Heterotetrameric enzyme that catalyzes the condensation of farnesyl diphosphate (FPP), which acts as a primer, and isopentenyl diphosphate (IPP) to produce prenyl diphosphates of varying chain lengths and participates in the determination of the side chain of ubiquinone. Supplies nona and decaprenyl diphosphate, the precursors for the side chain of the isoprenoid quinones ubiquinone-9 (Q9) and ubiquinone-10 (Q10) respectively. The enzyme adds isopentenyl diphosphate molecules sequentially to farnesyl diphosphate with trans stereochemistry. May play a role during cerebellar development. May regulate mitochondrial respiratory chain function. In Mus musculus (Mouse), this protein is All trans-polyprenyl-diphosphate synthase PDSS2.